The following is a 212-amino-acid chain: Uracil phosphoribosyltransferase (212 aa).

Residues R78, R103, and 130 to 138 contribute to the 5-phospho-alpha-D-ribose 1-diphosphate site; that span reads DPMLATGSS. Uracil contacts are provided by residues I193 and 198–200; that span reads GDA. Position 199 (D199) interacts with 5-phospho-alpha-D-ribose 1-diphosphate.

The protein belongs to the UPRTase family. Mg(2+) is required as a cofactor.

The enzyme catalyses UMP + diphosphate = 5-phospho-alpha-D-ribose 1-diphosphate + uracil. Its pathway is pyrimidine metabolism; UMP biosynthesis via salvage pathway; UMP from uracil: step 1/1. Its activity is regulated as follows. Allosterically activated by GTP. In terms of biological role, catalyzes the conversion of uracil and 5-phospho-alpha-D-ribose 1-diphosphate (PRPP) to UMP and diphosphate. In Pseudomonas fluorescens (strain ATCC BAA-477 / NRRL B-23932 / Pf-5), this protein is Uracil phosphoribosyltransferase.